The chain runs to 350 residues: Protein-glutamate methylesterase/protein-glutamine glutaminase (350 aa).

Positions 5-122 (KVLCVDDSAL…RDGLIEYSEV (118 aa)) constitute a Response regulatory domain. The residue at position 56 (aspartate 56) is a 4-aspartylphosphate. The CheB-type methylesterase domain occupies 152-346 (PFASSEKLVI…ERILTRLGDR (195 aa)). Catalysis depends on residues serine 165, histidine 191, and aspartate 288.

Belongs to the CheB family. Phosphorylated by CheA. Phosphorylation of the N-terminal regulatory domain activates the methylesterase activity.

The protein resides in the cytoplasm. It carries out the reaction [protein]-L-glutamate 5-O-methyl ester + H2O = L-glutamyl-[protein] + methanol + H(+). The enzyme catalyses L-glutaminyl-[protein] + H2O = L-glutamyl-[protein] + NH4(+). Involved in chemotaxis. Part of a chemotaxis signal transduction system that modulates chemotaxis in response to various stimuli. Catalyzes the demethylation of specific methylglutamate residues introduced into the chemoreceptors (methyl-accepting chemotaxis proteins or MCP) by CheR. Also mediates the irreversible deamidation of specific glutamine residues to glutamic acid. The sequence is that of Protein-glutamate methylesterase/protein-glutamine glutaminase from Bordetella bronchiseptica (strain ATCC BAA-588 / NCTC 13252 / RB50) (Alcaligenes bronchisepticus).